Consider the following 207-residue polypeptide: Large ribosomal subunit protein uL4 (207 aa).

Positions 45–89 are disordered; sequence RQGTHKVKTRSEVRGGGRKPWRQKGTGRARQGSIRSPQWRGGGTV. Residues 60 to 71 are compositionally biased toward basic residues; it reads GGRKPWRQKGTG.

Belongs to the universal ribosomal protein uL4 family. As to quaternary structure, part of the 50S ribosomal subunit.

One of the primary rRNA binding proteins, this protein initially binds near the 5'-end of the 23S rRNA. It is important during the early stages of 50S assembly. It makes multiple contacts with different domains of the 23S rRNA in the assembled 50S subunit and ribosome. Its function is as follows. Forms part of the polypeptide exit tunnel. The polypeptide is Large ribosomal subunit protein uL4 (Bacillus mycoides (strain KBAB4) (Bacillus weihenstephanensis)).